Here is a 316-residue protein sequence, read N- to C-terminus: Bifunctional protein FolD (316 aa).

Residues 165–167 (GKS) and isoleucine 231 each bind NADP(+).

This sequence belongs to the tetrahydrofolate dehydrogenase/cyclohydrolase family. Homodimer.

It catalyses the reaction (6R)-5,10-methylene-5,6,7,8-tetrahydrofolate + NADP(+) = (6R)-5,10-methenyltetrahydrofolate + NADPH. The catalysed reaction is (6R)-5,10-methenyltetrahydrofolate + H2O = (6R)-10-formyltetrahydrofolate + H(+). The protein operates within one-carbon metabolism; tetrahydrofolate interconversion. Catalyzes the oxidation of 5,10-methylenetetrahydrofolate to 5,10-methenyltetrahydrofolate and then the hydrolysis of 5,10-methenyltetrahydrofolate to 10-formyltetrahydrofolate. The protein is Bifunctional protein FolD of Sphingobium chlorophenolicum.